The primary structure comprises 738 residues: MEQTYQYAWIIPFVPLPVPMLIGVGLLLFPTATKNLRRMWAFPSILLLSIVMIFSINLSIQQIDSSCIYQYVWSWTINNDFSLEFGYLIDPLTSIMSMLITTVGIMVLIYSDNYMAHDQGYLRFFASMSFFSTSMLGLVTSSNLIQIYIFWELVGMCSYLLIGFWFTRPLAANACQKAFVTNRVGDFGLLLGILGFYWITGSFEFRDLFEILNNFISKNEVNSSFGTLCAALLFTGAVAKSAQFPLHVWLPDAMEGPTPISALIHAATMVAAGIFLVARLLPLFIVIPYIMNFISFIGIITVLLGATLALAQKDIKRGLAYSTMSQLGYMMLALGMGSYRSALFHLITHAYSKALLFLGSGSIIHSMETIVGYSPDKSQNMVLMGGLRKHVPITQISFLLGTLSLCGIPPLACFWSKDEILNDSWLYSPIFAIIAWSTAGLTAFYMFRIYLLTFEGHLNVHFQNYSGKQNTPFYSISLWGKGDSKRINKNFRLLKMNNSKSSSFFSKKPYRSGKNVRNRVGPFLTIVHFENQKSYSYPYESDNTMLFPLLVLGILTLFVGSLGIPFNQELDILTKWLTPSINLLHQKWNDSIDWYEFWKDASFSVSIAYFGIFIASFLYKPIYSSFPNFFLINLFVKTGPKRSLWDKILNGLYNWSYNRAYIDAFYTTSLTGAVRGLAQVTHFFDRRVIDGITNGVGVMSFFVGEGIKYVGGGRISSYLFFYLSCVSIFLLGLYFPVF.

16 consecutive transmembrane segments (helical) span residues 9 to 29 (WIIPFVPLPVPMLIGVGLLLF), 40 to 60 (WAFPSILLLSIVMIFSINLSI), 89 to 109 (IDPLTSIMSMLITTVGIMVLI), 125 to 145 (FASMSFFSTSMLGLVTSSNLI), 147 to 167 (IYIFWELVGMCSYLLIGFWFT), 185 to 205 (GDFGLLLGILGFYWITGSFEF), 230 to 250 (AALLFTGAVAKSAQFPLHVWL), 258 to 278 (TPISALIHAATMVAAGIFLVA), 280 to 300 (LLPLFIVIPYIMNFISFIGII), 327 to 347 (LGYMMLALGMGSYRSALFHLI), 354 to 374 (ALLFLGSGSIIHSMETIVGYS), 396 to 416 (ISFLLGTLSLCGIPPLACFWS), 425 to 445 (WLYSPIFAIIAWSTAGLTAFY), 546 to 566 (LFPLLVLGILTLFVGSLGIPF), 603 to 623 (FSVSIAYFGIFIASFLYKPIY), and 718 to 738 (YLFFYLSCVSIFLLGLYFPVF).

This sequence belongs to the complex I subunit 5 family. NDH is composed of at least 16 different subunits, 5 of which are encoded in the nucleus.

Its subcellular location is the plastid. The protein localises to the chloroplast thylakoid membrane. The enzyme catalyses a plastoquinone + NADH + (n+1) H(+)(in) = a plastoquinol + NAD(+) + n H(+)(out). It catalyses the reaction a plastoquinone + NADPH + (n+1) H(+)(in) = a plastoquinol + NADP(+) + n H(+)(out). NDH shuttles electrons from NAD(P)H:plastoquinone, via FMN and iron-sulfur (Fe-S) centers, to quinones in the photosynthetic chain and possibly in a chloroplast respiratory chain. The immediate electron acceptor for the enzyme in this species is believed to be plastoquinone. Couples the redox reaction to proton translocation, and thus conserves the redox energy in a proton gradient. The sequence is that of NAD(P)H-quinone oxidoreductase subunit 5, chloroplastic (ndhF) from Ligustrum vulgare (Common privet).